Reading from the N-terminus, the 250-residue chain is MSKENKTTDFGFTQVPWEEKQKKVAGVFHSVAAKYDLMNDLMSFGIHRIWKKQTIAKSGVRKGDNVLDLAGGTGDLAYKFCQMVGQQGKVILSDINSSMLEVGKEKLTNKGCVGNIEYVQANAECLPFPDNYFDCITISFGLRNVTDKDKALASMCRVLKPGGRSLVLEFSKPIIPLLSKVYDEYSFKALPFLGKIITQDAESYKYLAESIRKHPDQQTLKQMMYDAGFDNVEYQNMTGGIVALHIGYKY.

Residues threonine 73, aspartate 94, 122 to 123 (NA), and serine 139 each bind S-adenosyl-L-methionine.

The protein belongs to the class I-like SAM-binding methyltransferase superfamily. MenG/UbiE family.

The catalysed reaction is a 2-demethylmenaquinol + S-adenosyl-L-methionine = a menaquinol + S-adenosyl-L-homocysteine + H(+). It catalyses the reaction a 2-methoxy-6-(all-trans-polyprenyl)benzene-1,4-diol + S-adenosyl-L-methionine = a 5-methoxy-2-methyl-3-(all-trans-polyprenyl)benzene-1,4-diol + S-adenosyl-L-homocysteine + H(+). It functions in the pathway quinol/quinone metabolism; menaquinone biosynthesis; menaquinol from 1,4-dihydroxy-2-naphthoate: step 2/2. It participates in cofactor biosynthesis; ubiquinone biosynthesis. In terms of biological role, methyltransferase required for the conversion of demethylmenaquinol (DMKH2) to menaquinol (MKH2) and the conversion of 2-polyprenyl-6-methoxy-1,4-benzoquinol (DDMQH2) to 2-polyprenyl-3-methyl-6-methoxy-1,4-benzoquinol (DMQH2). The polypeptide is Ubiquinone/menaquinone biosynthesis C-methyltransferase UbiE (Francisella tularensis subsp. tularensis (strain FSC 198)).